The following is a 136-amino-acid chain: Small ribosomal subunit protein uS12 (136 aa).

3-methylthioaspartic acid is present on Asp89. The disordered stretch occupies residues 101 to 136 (SLDTSGVADRKQSRSKYGAKQPKAGVPAPVKGKGKR).

Belongs to the universal ribosomal protein uS12 family. As to quaternary structure, part of the 30S ribosomal subunit. Contacts proteins S8 and S17. May interact with IF1 in the 30S initiation complex.

With S4 and S5 plays an important role in translational accuracy. Functionally, interacts with and stabilizes bases of the 16S rRNA that are involved in tRNA selection in the A site and with the mRNA backbone. Located at the interface of the 30S and 50S subunits, it traverses the body of the 30S subunit contacting proteins on the other side and probably holding the rRNA structure together. The combined cluster of proteins S8, S12 and S17 appears to hold together the shoulder and platform of the 30S subunit. In Pelodictyon phaeoclathratiforme (strain DSM 5477 / BU-1), this protein is Small ribosomal subunit protein uS12.